A 95-amino-acid polypeptide reads, in one-letter code: Large ribosomal subunit protein eL37z (95 aa).

Zn(2+) contacts are provided by Cys-19, Cys-22, Cys-34, and Cys-37. A C4-type zinc finger spans residues 19-37 (CVRCGRRSFHIQKSRCSAC).

Belongs to the eukaryotic ribosomal protein eL37 family. The cofactor is Zn(2+).

In terms of biological role, binds to the 23S rRNA. The polypeptide is Large ribosomal subunit protein eL37z (RPL37A) (Arabidopsis thaliana (Mouse-ear cress)).